We begin with the raw amino-acid sequence, 941 residues long: Isoleucine--tRNA ligase (941 aa).

Residues 58 to 68 (PYANGNIHIGH) carry the 'HIGH' region motif. Glu-564 contributes to the L-isoleucyl-5'-AMP binding site. The short motif at 605-609 (KMSKS) is the 'KMSKS' region element. ATP is bound at residue Lys-608. Cys-904, Cys-907, Cys-924, and Cys-927 together coordinate Zn(2+).

The protein belongs to the class-I aminoacyl-tRNA synthetase family. IleS type 1 subfamily. In terms of assembly, monomer. Zn(2+) serves as cofactor.

The protein localises to the cytoplasm. It catalyses the reaction tRNA(Ile) + L-isoleucine + ATP = L-isoleucyl-tRNA(Ile) + AMP + diphosphate. Its function is as follows. Catalyzes the attachment of isoleucine to tRNA(Ile). As IleRS can inadvertently accommodate and process structurally similar amino acids such as valine, to avoid such errors it has two additional distinct tRNA(Ile)-dependent editing activities. One activity is designated as 'pretransfer' editing and involves the hydrolysis of activated Val-AMP. The other activity is designated 'posttransfer' editing and involves deacylation of mischarged Val-tRNA(Ile). In Buchnera aphidicola subsp. Cinara cedri (strain Cc), this protein is Isoleucine--tRNA ligase.